Consider the following 163-residue polypeptide: Phosphopantetheine adenylyltransferase (163 aa).

Thr10 contributes to the substrate binding site. Residues 10 to 11 (TF) and His18 each bind ATP. Substrate is bound by residues Lys42, Leu74, and Arg88. ATP is bound by residues 89–91 (GLR), Glu99, and 124–130 (NSFISST).

This sequence belongs to the bacterial CoaD family. In terms of assembly, homohexamer. Requires Mg(2+) as cofactor.

It localises to the cytoplasm. It catalyses the reaction (R)-4'-phosphopantetheine + ATP + H(+) = 3'-dephospho-CoA + diphosphate. It functions in the pathway cofactor biosynthesis; coenzyme A biosynthesis; CoA from (R)-pantothenate: step 4/5. Reversibly transfers an adenylyl group from ATP to 4'-phosphopantetheine, yielding dephospho-CoA (dPCoA) and pyrophosphate. This chain is Phosphopantetheine adenylyltransferase, found in Shewanella baltica (strain OS155 / ATCC BAA-1091).